A 115-amino-acid polypeptide reads, in one-letter code: Nascent polypeptide-associated complex protein (115 aa).

Residues 6–72 (PMNPKQLKKL…SEEEKAIINI (67 aa)) form the NAC-A/B domain.

The protein belongs to the NAC-alpha family. In terms of assembly, homodimer. Interacts with the ribosome. Binds ribosomal RNA.

Its function is as follows. Contacts the emerging nascent chain on the ribosome. This is Nascent polypeptide-associated complex protein from Pyrococcus horikoshii (strain ATCC 700860 / DSM 12428 / JCM 9974 / NBRC 100139 / OT-3).